A 377-amino-acid chain; its full sequence is Histidinol-phosphate aminotransferase 2 (377 aa).

Residues 17–44 (NLSPYVPGEQPQHDDLCKLNTNENPFPP) form a disordered region. Lys-228 carries the post-translational modification N6-(pyridoxal phosphate)lysine.

This sequence belongs to the class-II pyridoxal-phosphate-dependent aminotransferase family. Histidinol-phosphate aminotransferase subfamily. Homodimer. Pyridoxal 5'-phosphate serves as cofactor.

It catalyses the reaction L-histidinol phosphate + 2-oxoglutarate = 3-(imidazol-4-yl)-2-oxopropyl phosphate + L-glutamate. It functions in the pathway amino-acid biosynthesis; L-histidine biosynthesis; L-histidine from 5-phospho-alpha-D-ribose 1-diphosphate: step 7/9. The chain is Histidinol-phosphate aminotransferase 2 from Psychrobacter arcticus (strain DSM 17307 / VKM B-2377 / 273-4).